A 408-amino-acid chain; its full sequence is Protein trichome birefringence-like 14 (408 aa).

The chain crosses the membrane as a helical; Signal-anchor for type II membrane protein span at residues 11 to 31; it reads GSVSLALIVLILLVIILLVSE. The GDS motif motif lies at 131-133; sequence GDS. Residues 387–401 carry the DCXHWCLPGXXDXWN motif motif; that stretch reads DCLHWCLPGIPDTWN.

The protein belongs to the PC-esterase family. TBL subfamily.

The protein localises to the membrane. Functionally, may act as a bridging protein that binds pectin and other cell wall polysaccharides. Probably involved in maintaining esterification of pectins. May be involved in the specific O-acetylation of cell wall polymers. The polypeptide is Protein trichome birefringence-like 14 (TBL14) (Arabidopsis thaliana (Mouse-ear cress)).